The chain runs to 147 residues: Protein phosphatase 1 regulatory subunit 14A (147 aa).

Basic residues predominate over residues 1-11 (MAAQRLGKRVL). The tract at residues 1 to 37 (MAAQRLGKRVLSKLQSPSRARGPGGSPGGLQKRHARV) is disordered. The residue at position 26 (Ser-26) is a Phosphoserine. Residues 35–120 (ARVTVKYDRR…LLVKLRGLHK (86 aa)) form an inhibitory region. Residue Thr-38 is modified to Phosphothreonine. The disordered stretch occupies residues 118–147 (LHKQPGLRQPSPSGDGSLSPRQDRARTAPP). Residues 127–137 (PSPSGDGSLSP) show a composition bias toward polar residues. A phosphoserine mark is found at Ser-128, Ser-134, and Ser-136. Residues 138 to 147 (RQDRARTAPP) are compositionally biased toward basic and acidic residues.

Belongs to the PP1 inhibitor family. Post-translationally, phosphorylation of Thr-38 induces a conformation change. In terms of tissue distribution, detected in aorta smooth muscle and bladder.

The protein localises to the cytoplasm. Its function is as follows. Inhibitor of PPP1CA. Has over 1000-fold higher inhibitory activity when phosphorylated, creating a molecular switch for regulating the phosphorylation status of PPP1CA substrates and smooth muscle contraction. The sequence is that of Protein phosphatase 1 regulatory subunit 14A (CPI17) from Sus scrofa (Pig).